A 161-amino-acid chain; its full sequence is Mediator of RNA polymerase II transcription subunit 10 (161 aa).

It belongs to the Mediator complex subunit 10 family. In terms of assembly, component of the Mediator complex.

It localises to the nucleus. Its function is as follows. Component of the Mediator complex, a coactivator involved in the regulated transcription of nearly all RNA polymerase II-dependent genes. Mediator functions as a bridge to convey information from gene-specific regulatory proteins to the basal RNA polymerase II transcription machinery. Mediator is recruited to promoters by direct interactions with regulatory proteins and serves as a scaffold for the assembly of a functional preinitiation complex with RNA polymerase II and the general transcription factors. The sequence is that of Mediator of RNA polymerase II transcription subunit 10 (NUT2) from Kluyveromyces lactis (strain ATCC 8585 / CBS 2359 / DSM 70799 / NBRC 1267 / NRRL Y-1140 / WM37) (Yeast).